The following is a 197-amino-acid chain: dITP/XTP pyrophosphatase (197 aa).

11–16 (SHNAGK) provides a ligand contact to substrate. Mg(2+) contacts are provided by E42 and D71. D71 acts as the Proton acceptor in catalysis. Residues S72, 155–158 (FGYD), K178, and 183–184 (HR) contribute to the substrate site.

The protein belongs to the HAM1 NTPase family. As to quaternary structure, homodimer. It depends on Mg(2+) as a cofactor.

It catalyses the reaction XTP + H2O = XMP + diphosphate + H(+). The catalysed reaction is dITP + H2O = dIMP + diphosphate + H(+). It carries out the reaction ITP + H2O = IMP + diphosphate + H(+). Functionally, pyrophosphatase that catalyzes the hydrolysis of nucleoside triphosphates to their monophosphate derivatives, with a high preference for the non-canonical purine nucleotides XTP (xanthosine triphosphate), dITP (deoxyinosine triphosphate) and ITP. Seems to function as a house-cleaning enzyme that removes non-canonical purine nucleotides from the nucleotide pool, thus preventing their incorporation into DNA/RNA and avoiding chromosomal lesions. This is dITP/XTP pyrophosphatase from Pseudomonas aeruginosa (strain ATCC 15692 / DSM 22644 / CIP 104116 / JCM 14847 / LMG 12228 / 1C / PRS 101 / PAO1).